Reading from the N-terminus, the 406-residue chain is 8-amino-7-oxononanoate synthase (406 aa).

R21 contacts substrate. 112–113 lines the pyridoxal 5'-phosphate pocket; the sequence is GY. H137 serves as a coordination point for substrate. Pyridoxal 5'-phosphate-binding residues include S183, H211, and T239. Residue K242 is modified to N6-(pyridoxal phosphate)lysine. T358 contacts substrate.

The protein belongs to the class-II pyridoxal-phosphate-dependent aminotransferase family. BioF subfamily. In terms of assembly, homodimer. It depends on pyridoxal 5'-phosphate as a cofactor.

It catalyses the reaction 6-carboxyhexanoyl-[ACP] + L-alanine + H(+) = (8S)-8-amino-7-oxononanoate + holo-[ACP] + CO2. The protein operates within cofactor biosynthesis; biotin biosynthesis. Catalyzes the decarboxylative condensation of pimeloyl-[acyl-carrier protein] and L-alanine to produce 8-amino-7-oxononanoate (AON), [acyl-carrier protein], and carbon dioxide. This Burkholderia cenocepacia (strain HI2424) protein is 8-amino-7-oxononanoate synthase.